A 389-amino-acid chain; its full sequence is 3-ketoacyl-CoA thiolase (389 aa).

Cys-91 serves as the catalytic Acyl-thioester intermediate. Active-site proton acceptor residues include His-343 and Cys-373.

It belongs to the thiolase-like superfamily. Thiolase family. In terms of assembly, heterotetramer of two alpha chains (FadB) and two beta chains (FadA).

The protein resides in the cytoplasm. The catalysed reaction is an acyl-CoA + acetyl-CoA = a 3-oxoacyl-CoA + CoA. It functions in the pathway lipid metabolism; fatty acid beta-oxidation. Its function is as follows. Catalyzes the final step of fatty acid oxidation in which acetyl-CoA is released and the CoA ester of a fatty acid two carbons shorter is formed. This chain is 3-ketoacyl-CoA thiolase, found in Citrobacter koseri (strain ATCC BAA-895 / CDC 4225-83 / SGSC4696).